Here is a 133-residue protein sequence, read N- to C-terminus: Membrane protein FAM174B (133 aa).

Positions 1-19 (MWLYTFAVALIVIAQEING) are cleaved as a signal peptide. The Extracellular portion of the chain corresponds to 20–67 (EPHTRPSSATPLNATLPPQEEGSAQNTTDAAVGSRLSTILRDLPTIKN). The interval 22–47 (HTRPSSATPLNATLPPQEEGSAQNTT) is disordered. 3 N-linked (GlcNAc...) asparagine glycosylation sites follow: N32, N45, and N67. The helical transmembrane segment at 68–88 (ISIFICVLTTLLITCLVIKIC) threads the bilayer. The Cytoplasmic portion of the chain corresponds to 89-133 (RSARKIRKTRKYDIITTPAERVEMAPLNEENDEEDDSTLFDVKYR). The interval 113–133 (APLNEENDEEDDSTLFDVKYR) is disordered. Residues 117-126 (EENDEEDDST) show a composition bias toward acidic residues.

Belongs to the FAM174 family.

The protein localises to the cell membrane. It is found in the golgi apparatus. In terms of biological role, essential for Golgi structural integrity. In Danio rerio (Zebrafish), this protein is Membrane protein FAM174B (Fam174b).